A 177-amino-acid chain; its full sequence is tRNA (cytidine(56)-2'-O)-methyltransferase (177 aa).

S-adenosyl-L-methionine-binding positions include leucine 84 and 109-113 (GAEKV).

This sequence belongs to the aTrm56 family. In terms of assembly, homodimer.

It localises to the cytoplasm. The catalysed reaction is cytidine(56) in tRNA + S-adenosyl-L-methionine = 2'-O-methylcytidine(56) in tRNA + S-adenosyl-L-homocysteine + H(+). Its function is as follows. Specifically catalyzes the AdoMet-dependent 2'-O-ribose methylation of cytidine at position 56 in tRNAs. In Methanosarcina acetivorans (strain ATCC 35395 / DSM 2834 / JCM 12185 / C2A), this protein is tRNA (cytidine(56)-2'-O)-methyltransferase.